The primary structure comprises 219 residues: Endonuclease III (219 aa).

The 20-residue stretch at 109 to 128 folds into the HhH domain; the sequence is RDELVKLPGVGRKTANVVVS. Residues Cys-189, Cys-196, Cys-199, and Cys-205 each contribute to the [4Fe-4S] cluster site.

The protein belongs to the Nth/MutY family. [4Fe-4S] cluster is required as a cofactor.

It catalyses the reaction 2'-deoxyribonucleotide-(2'-deoxyribose 5'-phosphate)-2'-deoxyribonucleotide-DNA = a 3'-end 2'-deoxyribonucleotide-(2,3-dehydro-2,3-deoxyribose 5'-phosphate)-DNA + a 5'-end 5'-phospho-2'-deoxyribonucleoside-DNA + H(+). Its function is as follows. DNA repair enzyme that has both DNA N-glycosylase activity and AP-lyase activity. The DNA N-glycosylase activity releases various damaged pyrimidines from DNA by cleaving the N-glycosidic bond, leaving an AP (apurinic/apyrimidinic) site. The AP-lyase activity cleaves the phosphodiester bond 3' to the AP site by a beta-elimination, leaving a 3'-terminal unsaturated sugar and a product with a terminal 5'-phosphate. In Bacillus subtilis (strain 168), this protein is Endonuclease III.